Reading from the N-terminus, the 380-residue chain is MGLPKSFVSMSLLFFSTLLILSLAFNAKNLTQRTNDEVKAMYESWLIKYGKSYNSLGEWERRFEIFKETLRFIDEHNADTNRSYKVGLNQFADLTDEEFRSTYLGFTSGSNKTKVSNQYEPRVGQVLPSYVDWRSAGAVVDIKSQGECGGCWAFSAIATVEGINKIVTGVLISLSEQELIDCGRTQNTRGCNVGYITDGFQFIINNGGINTEENYPYTAQDGECNVDLQNEKYVTIDTYENVPYNNEWALQTAVTYQPVSVALDAAGDAFKHYSSGIFIGPCGTAIDHAVTIVGYGTEGGIDYWIVKNSWDTTWGEEGYMRILRNVGGAGTCGIATMPSYPVKYNNQNHPKSYSSLINPPAFSMSNDGPVGVDDGQRYSA.

A signal peptide spans 1-24 (MGLPKSFVSMSLLFFSTLLILSLA). The propeptide at 25–126 (FNAKNLTQRT…NQYEPRVGQV (102 aa)) is activation peptide. 3 disulfide bridges follow: cysteine 148–cysteine 191, cysteine 182–cysteine 224, and cysteine 282–cysteine 332. Cysteine 151 is a catalytic residue. Cysteine 151 provides a ligand contact to E64. Catalysis depends on residues histidine 288 and asparagine 308.

Belongs to the peptidase C1 family. As to expression, fruit.

It carries out the reaction Specificity close to that of papain.. With respect to regulation, repressed by the active-site-directed cysteine protease inhibitor E64 (L-trans-epoxysuccinyl-leucylamide-(4-guanido)-butane) produced by Aspergillus japonicus. In terms of biological role, cysteine protease responsible for the cleavage of kiwellin into kissper and KiTH. The sequence is that of Actinidain from Actinidia chinensis var. chinensis (Chinese soft-hair kiwi).